A 181-amino-acid chain; its full sequence is RING-H2 finger protein ATL56 (181 aa).

The segment at 1–24 is disordered; sequence MPPTNNYRISGEPPSTTPSHPPPK. Residues 15 to 24 are compositionally biased toward pro residues; sequence STTPSHPPPK. A helical membrane pass occupies residues 32–52; the sequence is LFLVGVIMFSIFFLFLVLIGI. The RING-type; atypical zinc-finger motif lies at 110-152; that stretch reads CVVCFDGFRQGQWCRNLPGCGHVFHRKCVDTWLLKASTCPICR.

The protein belongs to the RING-type zinc finger family. ATL subfamily.

Its subcellular location is the membrane. It catalyses the reaction S-ubiquitinyl-[E2 ubiquitin-conjugating enzyme]-L-cysteine + [acceptor protein]-L-lysine = [E2 ubiquitin-conjugating enzyme]-L-cysteine + N(6)-ubiquitinyl-[acceptor protein]-L-lysine.. Its pathway is protein modification; protein ubiquitination. The protein is RING-H2 finger protein ATL56 (ATL56) of Arabidopsis thaliana (Mouse-ear cress).